The primary structure comprises 302 residues: Recombination-associated protein RdgC (302 aa).

This sequence belongs to the RdgC family.

The protein resides in the cytoplasm. It localises to the nucleoid. Functionally, may be involved in recombination. In Actinobacillus succinogenes (strain ATCC 55618 / DSM 22257 / CCUG 43843 / 130Z), this protein is Recombination-associated protein RdgC.